A 264-amino-acid chain; its full sequence is Complement C1q tumor necrosis factor-related protein 6 (264 aa).

The signal sequence occupies residues 1–24; the sequence is MRVIMGIASLGFLWAVFLLPLVFG. The N-linked (GlcNAc...) asparagine glycan is linked to Asn-77. The segment at 81–125 is disordered; sequence LKGDKGDRGPTGTPGKPGKNGTRGDRGSQGVKGDKGQAGSPGSSC. The 42-residue stretch at 83-124 folds into the Collagen-like domain; sequence GDKGDRGPTGTPGKPGKNGTRGDRGSQGVKGDKGQAGSPGSS. A compositionally biased stretch (low complexity) spans 90-100; that stretch reads PTGTPGKPGKN. The C1q domain occupies 125 to 264; the sequence is CQTHYSAFSV…SGHLIKAEDN (140 aa).

The protein resides in the secreted. The chain is Complement C1q tumor necrosis factor-related protein 6 (C1qtnf6) from Mus musculus (Mouse).